The chain runs to 962 residues: MPRSTWFKALLLLVALWAPLSQAETGWQPIQETIRKSDKDNRQYQAIRLDNGMVVLLVSDPQAVKSLSALVVPVGSLEDPEAYQGLAHYLEHMSLMGSKKYPQADSLAEYLKMHGGSHNASTAPYRTAFYLEVENDALPGAVDRLADAIAEPLLDKKYAERERNAVNAELTMARTRDGMRMAQVSAETINPAHPGSKFSGGNLETLSDKPGNPVQQALKDFHEKYYSANLMKAVIYSNKPLPELAKMAADTFGRVPNKESKKPEITVPVVTDAQKGIIIHYVPALPRKVLRVEFRIDNNSAKFRSKTDELITYLIGNRSPGTLSDWLQKQGLVEGISANSDPIVNGNSGVLAISASLTDKGLANRDQVVAAIFSYLNLLREKGIDKQYFDELANVLDIDFRYPSITRDMDYVEWLADTMIRVPVEHTLDAVNIADRYDAKAVKERLAMMTPQNARIWYISPKEPHNKTAYFVDAPYQVDKISEQTFADWQQKAANIALSLPELNPYIPDDFSLIKSEKKYDHPELIVDESNLRVVYAPSRYFSSEPKADVSLILRNPKAMDSARNQVMFALNDYLAGLALDQLSNQASVGGISFSTNANNGLMVNANGYTQRLPQLFQALLEGYFSYTATEDQLEQAKSWYNQMMDSAEKGKAFEQAIMPAQMLSQVPYFSRDERRKILPSITLKEVLAYRDALKSGARPEFMVIGNMTEAQATTLARDVQKQLGADGSEWCRNKDVVVDKKQSVIFEKAGNSTDSALAAVFVPTGYDEYTSSAYSSLLGQIVQPWFYNQLRTEEQLGYAVFAFPMSVGRQWGMGFLLQSNDKQPSFLWERYKAFFPTAEAKLRAMKPDEFAQIQQAVITQMLQAPQTLGEEALKLSKDFDRGNMRFDSRDKIVAQIKLLTPQKLADFFHQAVVEPQGMAILSQISGSQNGKAEYVHPEGWKVWENVSALQQTMPLMSEKNE.

An N-terminal signal peptide occupies residues 1–23 (MPRSTWFKALLLLVALWAPLSQA). His-88 is a Zn(2+) binding site. The Proton acceptor role is filled by Glu-91. Residues His-92 and Glu-169 each coordinate Zn(2+).

It belongs to the peptidase M16 family. As to quaternary structure, monomer. Requires Zn(2+) as cofactor.

The protein localises to the periplasm. It carries out the reaction Preferential cleavage of 16-Tyr-|-Leu-17 and 25-Phe-|-Tyr-26 bonds of oxidized insulin B chain. Also acts on other substrates of Mw less than 7 kDa such as insulin and glucagon.. Functionally, endopeptidase that degrades small peptides of less than 7 kDa, such as glucagon and insulin. The chain is Protease 3 (ptrA) from Escherichia coli O157:H7.